The chain runs to 416 residues: MSLVAIGINHKTATVDLREKVAFGPDKIHDAMKSLAASTQSGEAVIISTCNRTELYCNNCEAADVVAWLEDYHQLSHEDVEPCLYQYKGQEAVKHLMRVSAGLDSLILGEPQILGQVKQSFVKAKEAGTVAATMDRMFQNTFSVAKKIRTETEIGAAAVSVAFAAVSMAKHIFSSISTTQVLLVGAGETIELVARHLKDNGVTTMVVANRTISRAEAMCEEFGATAITLEQIPDFLPKADIVISSTASPLPILGKGMVEKALKQRRHQPMLLVDIAVPRDIEAEVADLDDAFLYTVDDLQSIIEQNMASRREAAEQAELIAEDQAYQFMEWIRSLESVDSIREYRTKSMAIKDELVERAVNKLAQGGNSEQVLLELANKLTNKLIHAPTQALTAASRQGDLNSLGQLRALLGLDKD.

Substrate is bound by residues 49 to 52 (TCNR), Ser-105, 110 to 112 (EPQ), and Gln-116. The active-site Nucleophile is Cys-50. 185-190 (GAGETI) serves as a coordination point for NADP(+).

The protein belongs to the glutamyl-tRNA reductase family. Homodimer.

The enzyme catalyses (S)-4-amino-5-oxopentanoate + tRNA(Glu) + NADP(+) = L-glutamyl-tRNA(Glu) + NADPH + H(+). It participates in porphyrin-containing compound metabolism; protoporphyrin-IX biosynthesis; 5-aminolevulinate from L-glutamyl-tRNA(Glu): step 1/2. Catalyzes the NADPH-dependent reduction of glutamyl-tRNA(Glu) to glutamate 1-semialdehyde (GSA). This Shewanella pealeana (strain ATCC 700345 / ANG-SQ1) protein is Glutamyl-tRNA reductase.